The following is a 238-amino-acid chain: Urease accessory protein UreF (238 aa).

This sequence belongs to the UreF family. In terms of assembly, ureD, UreF and UreG form a complex that acts as a GTP-hydrolysis-dependent molecular chaperone, activating the urease apoprotein by helping to assemble the nickel containing metallocenter of UreC. The UreE protein probably delivers the nickel.

It is found in the cytoplasm. Its function is as follows. Required for maturation of urease via the functional incorporation of the urease nickel metallocenter. This is Urease accessory protein UreF from Delftia acidovorans (strain DSM 14801 / SPH-1).